A 182-amino-acid chain; its full sequence is uncharacterized protein (182 aa).

Disordered regions lie at residues 1-49 and 126-171; these read MAAP…DGGS and QGGH…VHAQ. The span at 17 to 39 shows a compositional bias: basic and acidic residues; the sequence is ELLEKAARLERGPPPRGDPEAVG.

This is an uncharacterized protein from Homo sapiens (Human).